A 189-amino-acid polypeptide reads, in one-letter code: Elongation factor P (189 aa).

This sequence belongs to the elongation factor P family.

The protein localises to the cytoplasm. The protein operates within protein biosynthesis; polypeptide chain elongation. In terms of biological role, involved in peptide bond synthesis. Stimulates efficient translation and peptide-bond synthesis on native or reconstituted 70S ribosomes in vitro. Probably functions indirectly by altering the affinity of the ribosome for aminoacyl-tRNA, thus increasing their reactivity as acceptors for peptidyl transferase. The polypeptide is Elongation factor P (Chloroflexus aurantiacus (strain ATCC 29364 / DSM 637 / Y-400-fl)).